A 604-amino-acid chain; its full sequence is Aspartate--tRNA(Asp/Asn) ligase (604 aa).

Residue Glu168 coordinates L-aspartate. An aspartate region spans residues 192-195 (QLFK). Arg214 is an L-aspartate binding site. Residues 214–216 (RDE) and Gln223 contribute to the ATP site. His446 contacts L-aspartate. Glu480 lines the ATP pocket. L-aspartate is bound at residue Arg487. 532–535 (GWDR) is an ATP binding site. Residues 575 to 604 (LEAGVDARPKPEARAQAGTAGPAAPVADPT) form a disordered region. Positions 577–587 (AGVDARPKPEA) are enriched in basic and acidic residues. Residues 588-604 (RAQAGTAGPAAPVADPT) are compositionally biased toward low complexity.

This sequence belongs to the class-II aminoacyl-tRNA synthetase family. Type 1 subfamily. Homodimer.

The protein resides in the cytoplasm. It catalyses the reaction tRNA(Asx) + L-aspartate + ATP = L-aspartyl-tRNA(Asx) + AMP + diphosphate. Aspartyl-tRNA synthetase with relaxed tRNA specificity since it is able to aspartylate not only its cognate tRNA(Asp) but also tRNA(Asn). Reaction proceeds in two steps: L-aspartate is first activated by ATP to form Asp-AMP and then transferred to the acceptor end of tRNA(Asp/Asn). This is Aspartate--tRNA(Asp/Asn) ligase from Salinispora arenicola (strain CNS-205).